We begin with the raw amino-acid sequence, 300 residues long: MNDELYARLRAELRGEILRDEPMARHTSLKVGGAADFFVTPADRDDLTALLALLAETGTPYLVVGGGYNLLVRDGGIRGVVISLARLDEMTLLAGERVMAGAGVTNRQFVQLLRDRGLGGLEFLCGIPGTVGGALAMNAGAHGGAVVDRVEELLTIRDGEMLQTGRDGLDYGYRFLRLAPGEIIVGATFRLDPADPDQIGARIAGYLEHRAASQKVGFPNAGSFFKNPEGTAAWRLIDETGLRGERVGGAQVSEAHANFLINRGGATAADFLALATRINEAVKQRTGITLEEEVRIVGEE.

The 165-residue stretch at 30–194 (KVGGAADFFV…VGATFRLDPA (165 aa)) folds into the FAD-binding PCMH-type domain. The active site involves Arg174. The Proton donor role is filled by Ser223. Glu293 is a catalytic residue.

It belongs to the MurB family. It depends on FAD as a cofactor.

It localises to the cytoplasm. It carries out the reaction UDP-N-acetyl-alpha-D-muramate + NADP(+) = UDP-N-acetyl-3-O-(1-carboxyvinyl)-alpha-D-glucosamine + NADPH + H(+). Its pathway is cell wall biogenesis; peptidoglycan biosynthesis. Functionally, cell wall formation. This Geobacter metallireducens (strain ATCC 53774 / DSM 7210 / GS-15) protein is UDP-N-acetylenolpyruvoylglucosamine reductase.